A 106-amino-acid polypeptide reads, in one-letter code: ATP-dependent Clp protease adapter protein ClpS (106 aa).

It belongs to the ClpS family. In terms of assembly, binds to the N-terminal domain of the chaperone ClpA.

Involved in the modulation of the specificity of the ClpAP-mediated ATP-dependent protein degradation. The polypeptide is ATP-dependent Clp protease adapter protein ClpS (Vibrio campbellii (strain ATCC BAA-1116)).